Reading from the N-terminus, the 717-residue chain is Fatty acid oxidation complex subunit alpha (717 aa).

The tract at residues 1-190 (MIHAGNAITV…KDGAVDAVVA (190 aa)) is enoyl-CoA hydratase/isomerase. Asp298 is a substrate binding site. The 3-hydroxyacyl-CoA dehydrogenase stretch occupies residues 313–717 (HPVNQAAVLG…MAANNKKFYG (405 aa)). Residues Met326, Asp345, 402 to 404 (VTE), Lys409, and Ser431 each bind NAD(+). Residue His452 is the For 3-hydroxyacyl-CoA dehydrogenase activity of the active site. Residue Asn455 participates in NAD(+) binding. Residue Asn502 coordinates substrate.

In the N-terminal section; belongs to the enoyl-CoA hydratase/isomerase family. The protein in the C-terminal section; belongs to the 3-hydroxyacyl-CoA dehydrogenase family. As to quaternary structure, heterotetramer of two alpha chains (FadB) and two beta chains (FadA).

The enzyme catalyses a (3S)-3-hydroxyacyl-CoA + NAD(+) = a 3-oxoacyl-CoA + NADH + H(+). It carries out the reaction a (3S)-3-hydroxyacyl-CoA = a (2E)-enoyl-CoA + H2O. It catalyses the reaction a 4-saturated-(3S)-3-hydroxyacyl-CoA = a (3E)-enoyl-CoA + H2O. The catalysed reaction is (3S)-3-hydroxybutanoyl-CoA = (3R)-3-hydroxybutanoyl-CoA. The enzyme catalyses a (3Z)-enoyl-CoA = a 4-saturated (2E)-enoyl-CoA. It carries out the reaction a (3E)-enoyl-CoA = a 4-saturated (2E)-enoyl-CoA. Its pathway is lipid metabolism; fatty acid beta-oxidation. In terms of biological role, involved in the aerobic and anaerobic degradation of long-chain fatty acids via beta-oxidation cycle. Catalyzes the formation of 3-oxoacyl-CoA from enoyl-CoA via L-3-hydroxyacyl-CoA. It can also use D-3-hydroxyacyl-CoA and cis-3-enoyl-CoA as substrate. This is Fatty acid oxidation complex subunit alpha from Acinetobacter baumannii (strain ACICU).